The following is a 710-amino-acid chain: MNPIIKKFQYGNQTVTLETGRIARQATGAVLVSIGEVAVLCTVVGAKEASPGQDFFPLSVHYQEKAYAAGRIPGGYFKREGRPSEKETLTSRLIDRPIRPLFPEGFLNEVQVICTVVSTDKKQDPDIAAMIGTSAALAVSGIPFNGPIGAARVGYTQGEGYILNPSYKQLETSELDMVVAGTKDAVLMVESEAKELPEDIMLGAVLYGHQEMQAVIQACAELARDAGKARWDWQPVPENTELKTAIKAAFGVAIGDAYRITDKAERYNRLGELRSEAVAQFATEESGISADAVKSLFGTLEYNIVRSRIVANEPRIDGRDNKTVRPITVDVGVLPKAHGSALFTRGETQALVVATLGNARDVQIIDQLEGEKKEAFLLHYNFPPYSVGECGRMGSTGRREIGHGRLAKRGVQAVLPKAESFPYTLRVVSEITESNGSSSMASVCGSSLALMDAGVPLKAPVAGIAMGLVKEDNGFAVLTDILGDEDHLGDMDFKVAGTTSGVTALQMDIKIEGITEEIMEIALEQALAARLHILGEMNKVLSQSRTAVSENAPRFETIKIHPDKIRDIIGKGGATIRSITEETNSSIDIDDDGTVKVYADDNEALQAALNRIGAIVAEAEIGAIYEGTVVRIVDFGAFVNFLPGKDGLVHISQIADERVNNVSDYLKEGQVVKVKCLDVDQRGRIKLSIKEALAEEAGTAPAAEPVADAE.

Residues Asp-486 and Asp-492 each coordinate Mg(2+). Residues 553 to 612 enclose the KH domain; the sequence is PRFETIKIHPDKIRDIIGKGGATIRSITEETNSSIDIDDDGTVKVYADDNEALQAALNRI. The region spanning 622-690 is the S1 motif domain; sequence GAIYEGTVVR…QRGRIKLSIK (69 aa).

The protein belongs to the polyribonucleotide nucleotidyltransferase family. Component of the RNA degradosome, which is a multiprotein complex involved in RNA processing and mRNA degradation. Mg(2+) is required as a cofactor.

It localises to the cytoplasm. It catalyses the reaction RNA(n+1) + phosphate = RNA(n) + a ribonucleoside 5'-diphosphate. Functionally, involved in mRNA degradation. Catalyzes the phosphorolysis of single-stranded polyribonucleotides processively in the 3'- to 5'-direction. The protein is Polyribonucleotide nucleotidyltransferase of Cellvibrio japonicus (strain Ueda107) (Pseudomonas fluorescens subsp. cellulosa).